Consider the following 570-residue polypeptide: Low-affinity glucose transporter HXT1 (570 aa).

Polar residues predominate over residues 1-20; it reads MNSTPDLISPQKSNSSNSYE. The segment at 1 to 51 is disordered; it reads MNSTPDLISPQKSNSSNSYELESGRSKAMNTPEGKNESFHDNLSESQVQPA. The Cytoplasmic portion of the chain corresponds to 1 to 60; that stretch reads MNSTPDLISPQKSNSSNSYELESGRSKAMNTPEGKNESFHDNLSESQVQPAVAPPNTGKG. S23, S38, and S44 each carry phosphoserine. The segment covering 34–43 has biased composition (basic and acidic residues); sequence GKNESFHDNL. A helical membrane pass occupies residues 61 to 81; sequence VYVTVSICCVMVAFGGFIFGW. At 82 to 116 the chain is on the extracellular side; sequence DTGTISGFVAQTDFLRRFGMKHHDGSHYLSKVRTG. Residues 117-137 traverse the membrane as a helical segment; sequence LIVSIFNIGCAIGGIVLAKLG. Topologically, residues 138 to 143 are cytoplasmic; it reads DMYGRR. The helical transmembrane segment at 144–164 threads the bilayer; sequence IGLIVVVVIYTIGIIIQIASI. Over 165–174 the chain is Extracellular; sequence NKWYQYFIGR. Residues 175 to 195 traverse the membrane as a helical segment; sequence IISGLGVGGITVLSPMLISEV. The Cytoplasmic segment spans residues 196–201; it reads APSEMR. A helical transmembrane segment spans residues 202–222; the sequence is GTLVSCYQVMITLGIFLGYCT. Over 223 to 236 the chain is Extracellular; the sequence is NFGTKNYSNSVQWR. A glycan (N-linked (GlcNAc...) asparagine) is linked at N228. A helical membrane pass occupies residues 237 to 257; sequence VPLGLCFAWALFMIGGMMFVP. The Cytoplasmic portion of the chain corresponds to 258-340; sequence ESPRYLVEAG…IQSLQQLTGD (83 aa). The chain crosses the membrane as a helical span at residues 341–357; it reads NYFFYYGTIVFQAVGLS. At 358–363 the chain is on the extracellular side; that stretch reads DSFETS. The chain crosses the membrane as a helical span at residues 364-381; sequence IVFGVVNFFSTCCSLYTV. The Cytoplasmic portion of the chain corresponds to 382-388; it reads DRFGRRN. Residues 389 to 409 form a helical membrane-spanning segment; the sequence is CLMWGAVGMVCCYVVYASVGV. At 410 to 431 the chain is on the extracellular side; the sequence is TRLWPNGQDQPSSKGAGNCMIV. The chain crosses the membrane as a helical span at residues 432-452; it reads FACFYIFCFATTWAPIAYVVI. Topologically, residues 453–469 are cytoplasmic; the sequence is SECFPLRVKSKCMSIAS. Residues 470–490 form a helical membrane-spanning segment; sequence AANWIWGFLISFFTPFITGAI. N491 is a topological domain (extracellular). The helical transmembrane segment at 492-512 threads the bilayer; sequence FYYGYVFMGCMVFAYFYVFFF. Residues 513–570 lie on the Cytoplasmic side of the membrane; it reads VPETKGLSLEEVNDMYAEGVLPWKSASWVPVSKRGADYNADDLMHDDQPFYKSLFSRK.

This sequence belongs to the major facilitator superfamily. Sugar transporter (TC 2.A.1.1) family.

Its subcellular location is the membrane. Low-affinity glucose transporter. HXT1 is as well involved in the transport of mannose. This chain is Low-affinity glucose transporter HXT1 (HXT1), found in Saccharomyces cerevisiae (strain ATCC 204508 / S288c) (Baker's yeast).